A 364-amino-acid polypeptide reads, in one-letter code: 3-isopropylmalate dehydrogenase (364 aa).

Position 78 to 91 (78 to 91) interacts with NAD(+); the sequence is GKKWDNFPIEERPE. Arg-99, Arg-109, Arg-138, and Asp-228 together coordinate substrate. Mg(2+)-binding residues include Asp-228, Asp-252, and Asp-256. Residue 286–298 coordinates NAD(+); that stretch reads GSAPDIAGKNIAN.

It belongs to the isocitrate and isopropylmalate dehydrogenases family. LeuB type 1 subfamily. In terms of assembly, homodimer. Mg(2+) serves as cofactor. The cofactor is Mn(2+).

Its subcellular location is the cytoplasm. The enzyme catalyses (2R,3S)-3-isopropylmalate + NAD(+) = 4-methyl-2-oxopentanoate + CO2 + NADH. Its pathway is amino-acid biosynthesis; L-leucine biosynthesis; L-leucine from 3-methyl-2-oxobutanoate: step 3/4. Functionally, catalyzes the oxidation of 3-carboxy-2-hydroxy-4-methylpentanoate (3-isopropylmalate) to 3-carboxy-4-methyl-2-oxopentanoate. The product decarboxylates to 4-methyl-2 oxopentanoate. This chain is 3-isopropylmalate dehydrogenase, found in Buchnera aphidicola subsp. Uroleucon obscurum.